A 375-amino-acid chain; its full sequence is Erythronate-4-phosphate dehydrogenase (375 aa).

Residues S45 and T67 each contribute to the substrate site. D147 lines the NAD(+) pocket. Residue R209 is part of the active site. An NAD(+)-binding site is contributed by D233. E238 is an active-site residue. H255 serves as the catalytic Proton donor. Position 258 (G258) interacts with NAD(+). Y259 is a binding site for substrate.

Belongs to the D-isomer specific 2-hydroxyacid dehydrogenase family. PdxB subfamily. Homodimer.

Its subcellular location is the cytoplasm. It catalyses the reaction 4-phospho-D-erythronate + NAD(+) = (R)-3-hydroxy-2-oxo-4-phosphooxybutanoate + NADH + H(+). It participates in cofactor biosynthesis; pyridoxine 5'-phosphate biosynthesis; pyridoxine 5'-phosphate from D-erythrose 4-phosphate: step 2/5. In terms of biological role, catalyzes the oxidation of erythronate-4-phosphate to 3-hydroxy-2-oxo-4-phosphonooxybutanoate. The sequence is that of Erythronate-4-phosphate dehydrogenase from Shewanella amazonensis (strain ATCC BAA-1098 / SB2B).